The chain runs to 374 residues: RNA polymerase sigma factor SigA (374 aa).

Positions 141–211 are sigma-70 factor domain-2; sequence LAEANLRLVV…TRAIADQART (71 aa). An Interaction with polymerase core subunit RpoC motif is present at residues 165–168; the sequence is DLIQ. The segment at 220 to 296 is sigma-70 factor domain-3; that stretch reads ETINKLIRVQ…DQDATSPSDH (77 aa). The segment at 309 to 362 is sigma-70 factor domain-4; the sequence is VLDTLTDREENVLRLRFGLDDGRTRTLEEVGRVFGVTRERIRQIEAKALRKLRH. Positions 335–354 form a DNA-binding region, H-T-H motif; sequence LEEVGRVFGVTRERIRQIEA.

Belongs to the sigma-70 factor family. RpoD/SigA subfamily. As to quaternary structure, interacts transiently with the RNA polymerase catalytic core.

The protein localises to the cytoplasm. Functionally, sigma factors are initiation factors that promote the attachment of RNA polymerase to specific initiation sites and are then released. This sigma factor is the primary sigma factor during exponential growth. This is RNA polymerase sigma factor SigA from Listeria monocytogenes serovar 1/2a (strain ATCC BAA-679 / EGD-e).